The following is a 95-amino-acid chain: MRQYEMMIIIDPSQDERTVAPSLDKYLDIVRKENGSVEKVDIWGKRRLEYPINKKDEGIYVVLDLKCESATVLEIDRLLNINDQILRTKVLRKDQ.

This sequence belongs to the bacterial ribosomal protein bS6 family.

Its function is as follows. Binds together with bS18 to 16S ribosomal RNA. The polypeptide is Small ribosomal subunit protein bS6 (Corynebacterium jeikeium (strain K411)).